A 342-amino-acid chain; its full sequence is MNKDLLLSSYDYTLANELIANYPTNPKEDARLLVFDRKNKEIFHTTFKNLQDFLPNCAIFFNDTKVIKARIYGNKASGGKIELFLHQPFLNSHNPLFLAQIKGRIKKDEILYFKEDLKVRVVELLNDGLRKVQFFQNDKTLDTSNLYNLLDKIGHIPLPPYIKREDEKSDLKDYQSIFAKNLGAVAAPTASLHFSETMLENLRKKHEIYHLTLHVGAGTFKSVECENIQEHKMHSEFFNIPQQACEIIDSKQAILGVGTTVTRTIEYYTRTKTKNGFCDLFLHPQNPPIRQNHLLTNFHLPKSTLIMLVSAFIGREQCLKLYELAIKEKYRFYSYGDAMLIL.

Belongs to the QueA family. As to quaternary structure, monomer.

The protein localises to the cytoplasm. The catalysed reaction is 7-aminomethyl-7-carbaguanosine(34) in tRNA + S-adenosyl-L-methionine = epoxyqueuosine(34) in tRNA + adenine + L-methionine + 2 H(+). It functions in the pathway tRNA modification; tRNA-queuosine biosynthesis. Transfers and isomerizes the ribose moiety from AdoMet to the 7-aminomethyl group of 7-deazaguanine (preQ1-tRNA) to give epoxyqueuosine (oQ-tRNA). The protein is S-adenosylmethionine:tRNA ribosyltransferase-isomerase of Campylobacter jejuni subsp. jejuni serotype O:2 (strain ATCC 700819 / NCTC 11168).